The following is an 899-amino-acid chain: MPILNESLLRTRIFIGRGFRRSRCPYCGHHYWTLNPSQDNCGDQPCTPYGFIGNPPGTYRPESIKDVRERFLSFFEKRGHTRVARYPVVARWRNDVYLVGASIYDFQPWVTEGVVPPPANPLTISQPSIRLTDVDKVGRSGRHLTGFEMMAHHAFNFPGKEIYWINETVEYAHEFFTRELGFRDDEVTYKENIWEGGGNAGESFEVLVRGLELATLVFMHYRVIGDEYREMPIRIVDTGYGLERIYWVLTGKPTIYEAVFEGFLNKARQLLGLPKPDEKVLASLAIHMGQLDPEVLALDKAYVEVAKRIGIDSSELINFIKPQEALYVLADHSRTVSWMINDGVIPSNSGVGYLARLLIRRMLKYMHVIGAQVPLTEIFNTHLNYLINDYPELKESMQLILDLVDLEEAKYKSAISQLPKLISRIKGELTINDLINLYDSHGIPPEVVRDEAAKRGVKVNVPDNFYEMLAARHQKPAKGEEGNRLDVTADDVIDLPPTRELFYEDTYAFEGKAKVLKVIKGKYIVLDSTIFYPEGGGQPADRGVLRFNGVEAKVVDVQRVGPVIVHVIDGPTPGVGDVVEMRIDSERRLGLMRMHTGTHILLQSIRRVLGKHVWQAGAQKDIPLSRLDVTHYRLPTPDEVKRIEELANEVVLSDLPVKAELMPRNEAEAKYGFIIYQGGVVPGGEVRIVKVGEGNDTYDVEACGGTHLDRTSRIGLIKIVKVDKIQEGVIRFIFTTGKYALDYVRNLEGKLDSAASKLRVGRDEVDEAVDRLIKELNNAEERSRVLARKAIEADLANIVKSMITVSGFKVAVYYEDYWVRDYLQELASKYPGDVLVLIHGNEYQVYTNGKVKAIDVAKVLNELGGKGGGSGTFAQGVFNNPVKQDDVVNTIKRKLTLTQ.

Zn(2+) is bound by residues His595, His599, Cys703, and His707.

Belongs to the class-II aminoacyl-tRNA synthetase family. Zn(2+) is required as a cofactor.

The protein resides in the cytoplasm. The enzyme catalyses tRNA(Ala) + L-alanine + ATP = L-alanyl-tRNA(Ala) + AMP + diphosphate. Catalyzes the attachment of alanine to tRNA(Ala) in a two-step reaction: alanine is first activated by ATP to form Ala-AMP and then transferred to the acceptor end of tRNA(Ala). Also edits incorrectly charged Ser-tRNA(Ala) and Gly-tRNA(Ala) via its editing domain. The polypeptide is Alanine--tRNA ligase (Caldivirga maquilingensis (strain ATCC 700844 / DSM 13496 / JCM 10307 / IC-167)).